The following is a 216-amino-acid chain: GTP cyclohydrolase-2 (216 aa).

51 to 55 (RIHSE) lines the GTP pocket. 3 residues coordinate Zn(2+): cysteine 56, cysteine 67, and cysteine 69. Residues glutamine 72, 94–96 (EGR), and threonine 116 each bind GTP. Residue aspartate 128 is the Proton acceptor of the active site. Arginine 130 serves as the catalytic Nucleophile. Residues threonine 151 and lysine 156 each contribute to the GTP site.

Belongs to the GTP cyclohydrolase II family. Zn(2+) is required as a cofactor.

The enzyme catalyses GTP + 4 H2O = 2,5-diamino-6-hydroxy-4-(5-phosphoribosylamino)-pyrimidine + formate + 2 phosphate + 3 H(+). The protein operates within cofactor biosynthesis; riboflavin biosynthesis; 5-amino-6-(D-ribitylamino)uracil from GTP: step 1/4. Catalyzes the conversion of GTP to 2,5-diamino-6-ribosylamino-4(3H)-pyrimidinone 5'-phosphate (DARP), formate and pyrophosphate. The protein is GTP cyclohydrolase-2 of Haemophilus influenzae (strain PittEE).